Consider the following 119-residue polypeptide: Holo-[acyl-carrier-protein] synthase (119 aa).

Residues D8 and E58 each contribute to the Mg(2+) site.

It belongs to the P-Pant transferase superfamily. AcpS family. Requires Mg(2+) as cofactor.

The protein resides in the cytoplasm. It carries out the reaction apo-[ACP] + CoA = holo-[ACP] + adenosine 3',5'-bisphosphate + H(+). Its function is as follows. Transfers the 4'-phosphopantetheine moiety from coenzyme A to a Ser of acyl-carrier-protein. The sequence is that of Holo-[acyl-carrier-protein] synthase from Bacillus cereus (strain ZK / E33L).